The primary structure comprises 220 residues: Deoxyribose-phosphate aldolase 1 (220 aa).

Asp89 serves as the catalytic Proton donor/acceptor. Residue Lys151 is the Schiff-base intermediate with acetaldehyde of the active site. Lys180 functions as the Proton donor/acceptor in the catalytic mechanism.

Belongs to the DeoC/FbaB aldolase family. DeoC type 1 subfamily.

The protein resides in the cytoplasm. The catalysed reaction is 2-deoxy-D-ribose 5-phosphate = D-glyceraldehyde 3-phosphate + acetaldehyde. The protein operates within carbohydrate degradation; 2-deoxy-D-ribose 1-phosphate degradation; D-glyceraldehyde 3-phosphate and acetaldehyde from 2-deoxy-alpha-D-ribose 1-phosphate: step 2/2. Its function is as follows. Catalyzes a reversible aldol reaction between acetaldehyde and D-glyceraldehyde 3-phosphate to generate 2-deoxy-D-ribose 5-phosphate. In Staphylococcus aureus (strain COL), this protein is Deoxyribose-phosphate aldolase 1.